Consider the following 641-residue polypeptide: Protein BCAP (641 aa).

Coiled coils occupy residues 83 to 144, 191 to 270, 299 to 375, and 487 to 599; these read HWPV…KQND, EKDN…RKLE, QKQK…EREQ, and FKLE…TLNA.

Belongs to the ODF2 family.

The protein localises to the cytoplasm. The protein resides in the cytoskeleton. Its subcellular location is the microtubule organizing center. It localises to the centrosome. It is found in the centriole. The protein localises to the centriolar satellite. The protein resides in the cilium basal body. Acts as a suppressor of ciliogenesis, specifically, the initiation of ciliogenesis. The chain is Protein BCAP (odf2l) from Xenopus laevis (African clawed frog).